Consider the following 396-residue polypeptide: 2,3-diketo-5-methylthiopentyl-1-phosphate enolase (396 aa).

The active-site Proton acceptor is the Lys-85. Residues Lys-134, 160–163, His-251, Gly-323, and 345–346 each bind substrate; these read KDDE and GG. Mg(2+)-binding residues include Lys-160, Asp-162, and Glu-163. Lys-160 is subject to N6-carboxylysine.

Belongs to the RuBisCO large chain family. Type IV subfamily. As to quaternary structure, homodimer. Mg(2+) serves as cofactor.

It carries out the reaction 5-methylsulfanyl-2,3-dioxopentyl phosphate = 2-hydroxy-5-methylsulfanyl-3-oxopent-1-enyl phosphate. The protein operates within amino-acid biosynthesis; L-methionine biosynthesis via salvage pathway; L-methionine from S-methyl-5-thio-alpha-D-ribose 1-phosphate: step 3/6. In terms of biological role, catalyzes the enolization of 2,3-diketo-5-methylthiopentyl-1-phosphate (DK-MTP-1-P) into 2-hydroxy-3-keto-5-methylthiopentenyl-1-phosphate (HK-MTPenyl-1-P). The polypeptide is 2,3-diketo-5-methylthiopentyl-1-phosphate enolase (Exiguobacterium sibiricum (strain DSM 17290 / CCUG 55495 / CIP 109462 / JCM 13490 / 255-15)).